The primary structure comprises 256 residues: 5-oxoprolinase subunit A 2 (256 aa).

This sequence belongs to the LamB/PxpA family. In terms of assembly, forms a complex composed of PxpA, PxpB and PxpC.

It catalyses the reaction 5-oxo-L-proline + ATP + 2 H2O = L-glutamate + ADP + phosphate + H(+). Functionally, catalyzes the cleavage of 5-oxoproline to form L-glutamate coupled to the hydrolysis of ATP to ADP and inorganic phosphate. The polypeptide is 5-oxoprolinase subunit A 2 (Bradyrhizobium diazoefficiens (strain JCM 10833 / BCRC 13528 / IAM 13628 / NBRC 14792 / USDA 110)).